Consider the following 339-residue polypeptide: DNA-directed RNA polymerase subunit alpha (339 aa).

Positions 1-233 are alpha N-terminal domain (alpha-NTD); sequence MVREEVAGST…DLFLPFLHAE (233 aa). Positions 264-339 are alpha C-terminal domain (alpha-CTD); that stretch reads KKGIPLNCIF…IDLLKNKLSF (76 aa).

Belongs to the RNA polymerase alpha chain family. In plastids the minimal PEP RNA polymerase catalytic core is composed of four subunits: alpha, beta, beta', and beta''. When a (nuclear-encoded) sigma factor is associated with the core the holoenzyme is formed, which can initiate transcription.

It is found in the plastid. Its subcellular location is the chloroplast. It catalyses the reaction RNA(n) + a ribonucleoside 5'-triphosphate = RNA(n+1) + diphosphate. DNA-dependent RNA polymerase catalyzes the transcription of DNA into RNA using the four ribonucleoside triphosphates as substrates. This Aegilops uniaristata (Goatgrass) protein is DNA-directed RNA polymerase subunit alpha.